The chain runs to 357 residues: Aspartate-semialdehyde dehydrogenase (357 aa).

NADP(+)-binding residues include Thr-12, Gly-13, Thr-14, Val-15, Ser-37, Ser-40, Leu-84, and Asp-85. Residue Cys-151 is the Acyl-thioester intermediate of the active site. Gly-183 contributes to the NADP(+) binding site. His-247 acts as the Proton acceptor in catalysis. Position 323 is a phosphoserine (Ser-323). An NADP(+)-binding site is contributed by Asn-335.

It belongs to the aspartate-semialdehyde dehydrogenase family.

It localises to the cytoplasm. The protein localises to the cytosol. It is found in the nucleus. The enzyme catalyses L-aspartate 4-semialdehyde + phosphate + NADP(+) = 4-phospho-L-aspartate + NADPH + H(+). Its pathway is amino-acid biosynthesis; L-methionine biosynthesis via de novo pathway; L-homoserine from L-aspartate: step 2/3. It functions in the pathway amino-acid biosynthesis; L-threonine biosynthesis; L-threonine from L-aspartate: step 2/5. Catalyzes the NADPH-dependent formation of L-aspartate 4-semialdehyde (L-ASA) by the reductive dephosphorylation of 4-phospho-L-aspartate. Mediates the second step in the biosynthesis of amino acids that derive from aspartate (the aspartate family of amino acids), including methioinine and threonine, the latter of which is a precursor to isoleucine. This is Aspartate-semialdehyde dehydrogenase from Schizosaccharomyces pombe (strain 972 / ATCC 24843) (Fission yeast).